Consider the following 164-residue polypeptide: Peptide deformylase-like (164 aa).

The active site involves E134.

The protein belongs to the polypeptide deformylase family.

The sequence is that of Peptide deformylase-like from Brucella melitensis biotype 1 (strain ATCC 23456 / CCUG 17765 / NCTC 10094 / 16M).